The chain runs to 322 residues: GDSL esterase/lipase At2g04020 (322 aa).

An N-terminal signal peptide occupies residues 1 to 26 (MGLPSSLESYLLLILLSFLNVSTIYS). The active-site Nucleophile is the Ser-50. Asn-260 carries an N-linked (GlcNAc...) asparagine glycan. Residues Asp-296 and His-299 contribute to the active site.

Belongs to the 'GDSL' lipolytic enzyme family.

The protein localises to the secreted. This is GDSL esterase/lipase At2g04020 from Arabidopsis thaliana (Mouse-ear cress).